The chain runs to 534 residues: MKYIVVTGGVMSGLGKGITIASIGRNLKNKGYKVTAIKIDPYINIDAGTMSPYQHGEVFVLRDGGEVDLDLGNYERFLDTELTRDHNITTGKVYQEVIAKERRGDYLGKTVQIIPHITNEIKNKIRKVAARSGADVCLIEIGGTVGDIESMPFLEAVRQMHREEPSENIVFIHVTLVMEDLQGEQKTKPTQHSVKELRALGLSPEVIVTRSKTPLQESAKEKIALFCDVPQELVISAHDAGDIYEVPLEIEEQGLTTQLMKHLRLESGVDDGGWREMVARMKSTTDEVKLAIVGKYTNLEDSYLSILEAVKHGGIDNACRVEVNMVEAETLEEDLVEVEKLKQYDGILIPGGFGGRGTEGKMLAIKFARENDIPFLGICLGMQLAVIEFARNVANLENANSTEFDEDTPYPVIDILPEQTGVADMGGTMRLGDYDAILKEGSFATKLYGTNYIVERHRHRYEVNPEFVDRLESFGIVFSGKNKNRMEIAEIPGKRFFFASQFHPEFKSRPGRPSPPFKGLVRAMCKYRKEREVQ.

The interval 1 to 265 is amidoligase domain; it reads MKYIVVTGGV…TTQLMKHLRL (265 aa). S12 serves as a coordination point for CTP. S12 provides a ligand contact to UTP. Residue 13–18 coordinates ATP; sequence GLGKGI. Residue Y53 coordinates L-glutamine. D70 contacts ATP. 2 residues coordinate Mg(2+): D70 and E140. CTP-binding positions include 147–149, 186–191, and K222; these read DIE and KTKPTQ. UTP is bound by residues 186–191 and K222; that span reads KTKPTQ. Positions 289–530 constitute a Glutamine amidotransferase type-1 domain; the sequence is KLAIVGKYTN…VRAMCKYRKE (242 aa). G352 contacts L-glutamine. The active-site Nucleophile; for glutamine hydrolysis is the C379. L-glutamine contacts are provided by residues 380–383, E403, and R460; that span reads LGMQ. Catalysis depends on residues H503 and E505.

This sequence belongs to the CTP synthase family. As to quaternary structure, homotetramer.

It carries out the reaction UTP + L-glutamine + ATP + H2O = CTP + L-glutamate + ADP + phosphate + 2 H(+). The enzyme catalyses L-glutamine + H2O = L-glutamate + NH4(+). The catalysed reaction is UTP + NH4(+) + ATP = CTP + ADP + phosphate + 2 H(+). It participates in pyrimidine metabolism; CTP biosynthesis via de novo pathway; CTP from UDP: step 2/2. With respect to regulation, allosterically activated by GTP, when glutamine is the substrate; GTP has no effect on the reaction when ammonia is the substrate. The allosteric effector GTP functions by stabilizing the protein conformation that binds the tetrahedral intermediate(s) formed during glutamine hydrolysis. Inhibited by the product CTP, via allosteric rather than competitive inhibition. Its function is as follows. Catalyzes the ATP-dependent amination of UTP to CTP with either L-glutamine or ammonia as the source of nitrogen. Regulates intracellular CTP levels through interactions with the four ribonucleotide triphosphates. The polypeptide is CTP synthase (Methanosarcina mazei (strain ATCC BAA-159 / DSM 3647 / Goe1 / Go1 / JCM 11833 / OCM 88) (Methanosarcina frisia)).